Here is a 421-residue protein sequence, read N- to C-terminus: Cyclin-A1 (421 aa).

The segment at 1–20 (MRRHSSKSGVALPPVGQGPD) is disordered.

This sequence belongs to the cyclin family. Cyclin AB subfamily. In terms of assembly, interacts with the CDK2 and the CDC2 protein kinases to form a serine/threonine kinase holoenzyme complex. The cyclin subunit imparts substrate specificity to the complex. Does not bind CDK4 and CDK5 (in vitro). The cyclin A1-CDK2 complex interacts with transcription factor E2F-1 and RB proteins. Found in a complex with CDK2, CABLES1 and CCNE1. Interacts with INCA1 and KLHDC9. In terms of processing, polyubiquitinated via 'Lys-11'-linked ubiquitin by the anaphase-promoting complex (APC/C), leading to its degradation by the proteasome. Deubiquitinated and stabilized by USP37 enables entry into S phase. Ubiquitinated during the G1 phase by the SCF(FBXO31) complex, leading to its proteasomal degradation.

The protein localises to the nucleus. Functionally, may be involved in the control of the cell cycle at the G1/S (start) and G2/M (mitosis) transitions. May primarily function in the control of the germline meiotic cell cycle and additionally in the control of mitotic cell cycle in some somatic cells. This is Cyclin-A1 (Ccna1) from Rattus norvegicus (Rat).